The sequence spans 538 residues: Prickle planar cell polarity protein 3-A (538 aa).

The 110-residue stretch at 66-175 (SGSQRDSLCE…CVRPVSGTMS (110 aa)) folds into the PET domain. LIM zinc-binding domains are found at residues 177-241 (TVCQ…ELKR), 242-302 (PRCL…LYAQ), and 305-366 (DSCG…NATP). The segment covering 369 to 378 (SFSPSQTDLS) has biased composition (polar residues). Disordered regions lie at residues 369–398 (SFSPSQTDLSFQKETKDVGTSTNHELDGDS), 433–463 (RGAPKEFSRECPNRRSLPDLNSHTRTPTRVT), and 475–538 (SVSL…CLLS). Positions 435 to 449 (APKEFSRECPNRRSL) are enriched in basic and acidic residues. Positions 451-463 (DLNSHTRTPTRVT) are enriched in polar residues. Low complexity-rich tracts occupy residues 475–488 (SVSLSHPSFTSSSS) and 514–523 (APPTHAPTST).

It belongs to the prickle / espinas / testin family. In terms of assembly, interacts with vangl2 via its C-terminus. The vangl2-dependent membrane recruitment of prickle3 is a prerequisite for its polarization. Interacts with wtip. Wtip is involved in the recruitment of prickle3 to the basal body. In terms of tissue distribution, predominantly expressed in the epidermal ectoderm.

The protein resides in the cytoplasm. The protein localises to the cell membrane. Its subcellular location is the mitochondrion. Involved in the planar cell polarity (PCP) pathway that is essential for the polarization of epithelial cells during morphogenetic processes, including gastrulation and neurulation. PCP is maintained by two molecular modules, the global and the core modules. Proteins of the core module include the proteins Frizzled (Fz), Disheveled (Dsh), Van Gogh (Vang), Prickle (Pk), Flamingo (Fmi, Celsr) and Diego (Dgo). The core module proteins develop subcellular asymmetry, accumulating in two groups on opposite sides of epithelial cells. Distinct proximal (Vang, Pk and Fmi) and distal (Fz, Dsh, Dgo and Fmi) complexes segregate to opposite sides of the cell, where they interact with the opposite complex in the neighboring cell at or near the adherents junctions. Directional information to orient polarization with respect to the tissue axes is provided by the global module which involves Wnt proteins. Involved in the organization of the basal body. Involved in cilia growth and positioning. Required for proper assembly, stability, and function of mitochondrial membrane ATP synthase (mitochondrial complex V). This is Prickle planar cell polarity protein 3-A (prickle3-a) from Xenopus laevis (African clawed frog).